Reading from the N-terminus, the 971-residue chain is Valine--tRNA ligase (971 aa).

Positions 55–65 match the 'HIGH' region motif; the sequence is PNVTGSLHMGH. A 'KMSKS' region motif is present at residues 572–576; the sequence is KMSKS. ATP is bound at residue K575. Residues 906–933 adopt a coiled-coil conformation; the sequence is KAELGRLQKDLDKVQKQHDQIASKLANE.

It belongs to the class-I aminoacyl-tRNA synthetase family. ValS type 1 subfamily. In terms of assembly, monomer.

It is found in the cytoplasm. The enzyme catalyses tRNA(Val) + L-valine + ATP = L-valyl-tRNA(Val) + AMP + diphosphate. Catalyzes the attachment of valine to tRNA(Val). As ValRS can inadvertently accommodate and process structurally similar amino acids such as threonine, to avoid such errors, it has a 'posttransfer' editing activity that hydrolyzes mischarged Thr-tRNA(Val) in a tRNA-dependent manner. This Acinetobacter baylyi (strain ATCC 33305 / BD413 / ADP1) protein is Valine--tRNA ligase.